The primary structure comprises 416 residues: Enterobactin exporter EntS (416 aa).

The Cytoplasmic portion of the chain corresponds to 1–21; the sequence is MNKQSWLLNLSLLKTHPAFRA. Residues 22-42 traverse the membrane as a helical segment; the sequence is VFLARFISIVSLGLLGVAVPV. At 43–55 the chain is on the periplasmic side; that stretch reads QIQMMTHSTWQVG. The helical transmembrane segment at 56 to 76 threads the bilayer; sequence LSVTLTGGAMFVGLMVGGVLA. The Cytoplasmic segment spans residues 77–83; it reads DRYERKK. Residues 84–104 traverse the membrane as a helical segment; that stretch reads VILLARGTCGIGFIGLCLNAL. At 105 to 109 the chain is on the periplasmic side; sequence LPEPS. Residues 110-130 form a helical membrane-spanning segment; it reads LLAIYLLGLWDGFFASLGVTA. The Cytoplasmic portion of the chain corresponds to 131–156; that stretch reads LLAATPALVGRENLMQAGAITMLTVR. A helical membrane pass occupies residues 157–177; that stretch reads LGSVNSPMIGGLLLAIGGVAW. Position 178 (Asn178) is a topological domain, periplasmic. A helical transmembrane segment spans residues 179 to 199; the sequence is YGLAAAGTFITLLPLLSLPAL. Residues 200 to 218 lie on the Cytoplasmic side of the membrane; the sequence is PPPPQPREHPLKSLLAGFR. A helical transmembrane segment spans residues 219-239; the sequence is FLLASPLVGGIALLGGLLTMA. Over 240-256 the chain is Periplasmic; it reads SAVRVLYPALADNWQMS. Residues 257-277 form a helical membrane-spanning segment; that stretch reads AAQIGFLYAAIPLGAAIGALT. The Cytoplasmic segment spans residues 278–287; sequence SGKLAHSARP. Residues 288-307 form a helical membrane-spanning segment; the sequence is GLLMLLSTLGSFLAIGLFGL. At 308–313 the chain is on the periplasmic side; that stretch reads MPMWIL. A helical transmembrane segment spans residues 314-336; that stretch reads GVVCLALFGWLSAVSSLLQYTML. Topologically, residues 337–356 are cytoplasmic; the sequence is QTQTPEVMLGRINGLWTAQN. The helical transmembrane segment at 357 to 377 threads the bilayer; sequence VTGDAIGAALLGGLGAMMTPV. Ala378 is a topological domain (periplasmic). A helical membrane pass occupies residues 379–399; that stretch reads SASASGFGLLIIGVLLLLVLV. Residues 400-416 lie on the Cytoplasmic side of the membrane; sequence ELRHFRQTPPQVTASDS.

The protein belongs to the major facilitator superfamily. EntS (TC 2.A.1.38) family.

The protein resides in the cell inner membrane. In terms of biological role, component of an export pathway for enterobactin. The chain is Enterobactin exporter EntS from Shigella dysenteriae serotype 1 (strain Sd197).